The primary structure comprises 304 residues: Voltage-dependent anion channel-forming protein YneE (304 aa).

4 consecutive transmembrane segments (helical) span residues leucine 28–leucine 48, isoleucine 50–phenylalanine 70, alanine 209–leucine 229, and tyrosine 235–alanine 255.

The protein belongs to the anion channel-forming bestrophin (TC 1.A.46) family.

The protein localises to the cell membrane. This is Voltage-dependent anion channel-forming protein YneE (yneE) from Salmonella typhi.